Here is a 124-residue protein sequence, read N- to C-terminus: Small ribosomal subunit protein uS12 (124 aa).

The residue at position 89 (aspartate 89) is a 3-methylthioaspartic acid. Residues 103–124 (DTAGVQKRRQGRSKYGAKRPKS) form a disordered region. Residues 108-124 (QKRRQGRSKYGAKRPKS) show a composition bias toward basic residues.

Belongs to the universal ribosomal protein uS12 family. As to quaternary structure, part of the 30S ribosomal subunit. Contacts proteins S8 and S17. May interact with IF1 in the 30S initiation complex.

Functionally, with S4 and S5 plays an important role in translational accuracy. Interacts with and stabilizes bases of the 16S rRNA that are involved in tRNA selection in the A site and with the mRNA backbone. Located at the interface of the 30S and 50S subunits, it traverses the body of the 30S subunit contacting proteins on the other side and probably holding the rRNA structure together. The combined cluster of proteins S8, S12 and S17 appears to hold together the shoulder and platform of the 30S subunit. This Methylococcus capsulatus (strain ATCC 33009 / NCIMB 11132 / Bath) protein is Small ribosomal subunit protein uS12.